Consider the following 333-residue polypeptide: MSTATFTLGIVGARGYTGAALITLLTAHPAIELIFVSSREYHGQPVAAHNPTYRGDLRFETLDPAAVAAKRADVVILALPNGNAAPYVHAIDATAPPTLIIDLSADTRFDPDWYYGLPELTRHTYTGQKRISNPGCYATAMQLAIAPLRDQLAGPPQCFGVSGYSGAGTTPSDKNNQALLRDNLMPYALTDHLHEREVSAQLGIPVEFMPHVAPHFRGITLTANLWLQRPLTREHIKILYATRYANDPLIDIIDPPPWVNQIAARHTVQIGAFTMALGNKRVVVVATLDNLLKGAATQALQNLNRALGLDELTAIPYHPKPPTSPLPSSPLAS.

Cysteine 136 is an active-site residue.

The protein belongs to the NAGSA dehydrogenase family. Type 1 subfamily.

Its subcellular location is the cytoplasm. It catalyses the reaction N-acetyl-L-glutamate 5-semialdehyde + phosphate + NADP(+) = N-acetyl-L-glutamyl 5-phosphate + NADPH + H(+). Its pathway is amino-acid biosynthesis; L-arginine biosynthesis; N(2)-acetyl-L-ornithine from L-glutamate: step 3/4. In terms of biological role, catalyzes the NADPH-dependent reduction of N-acetyl-5-glutamyl phosphate to yield N-acetyl-L-glutamate 5-semialdehyde. The protein is N-acetyl-gamma-glutamyl-phosphate reductase of Xylella fastidiosa (strain 9a5c).